Here is a 255-residue protein sequence, read N- to C-terminus: Imidazole glycerol phosphate synthase subunit HisF (255 aa).

Catalysis depends on residues Asp-11 and Asp-130.

Belongs to the HisA/HisF family. In terms of assembly, heterodimer of HisH and HisF.

It is found in the cytoplasm. The enzyme catalyses 5-[(5-phospho-1-deoxy-D-ribulos-1-ylimino)methylamino]-1-(5-phospho-beta-D-ribosyl)imidazole-4-carboxamide + L-glutamine = D-erythro-1-(imidazol-4-yl)glycerol 3-phosphate + 5-amino-1-(5-phospho-beta-D-ribosyl)imidazole-4-carboxamide + L-glutamate + H(+). It functions in the pathway amino-acid biosynthesis; L-histidine biosynthesis; L-histidine from 5-phospho-alpha-D-ribose 1-diphosphate: step 5/9. IGPS catalyzes the conversion of PRFAR and glutamine to IGP, AICAR and glutamate. The HisF subunit catalyzes the cyclization activity that produces IGP and AICAR from PRFAR using the ammonia provided by the HisH subunit. The protein is Imidazole glycerol phosphate synthase subunit HisF of Synechococcus sp. (strain ATCC 27144 / PCC 6301 / SAUG 1402/1) (Anacystis nidulans).